Here is a 221-residue protein sequence, read N- to C-terminus: Guanylate kinase (221 aa).

The region spanning 20–199 is the Guanylate kinase-like domain; sequence GLMFILSSPS…CFGKVREILA (180 aa). 27–34 serves as a coordination point for ATP; sequence SPSGAGKT.

This sequence belongs to the guanylate kinase family.

The protein resides in the cytoplasm. The enzyme catalyses GMP + ATP = GDP + ADP. In terms of biological role, essential for recycling GMP and indirectly, cGMP. The polypeptide is Guanylate kinase (Novosphingobium aromaticivorans (strain ATCC 700278 / DSM 12444 / CCUG 56034 / CIP 105152 / NBRC 16084 / F199)).